A 243-amino-acid chain; its full sequence is Segregation and condensation protein A (243 aa).

Belongs to the ScpA family. In terms of assembly, component of a cohesin-like complex composed of ScpA, ScpB and the Smc homodimer, in which ScpA and ScpB bind to the head domain of Smc. The presence of the three proteins is required for the association of the complex with DNA.

Its subcellular location is the cytoplasm. Its function is as follows. Participates in chromosomal partition during cell division. May act via the formation of a condensin-like complex containing Smc and ScpB that pull DNA away from mid-cell into both cell halves. The sequence is that of Segregation and condensation protein A from Staphylococcus haemolyticus (strain JCSC1435).